The following is a 186-amino-acid chain: Nucleoside diphosphate kinase 6 (186 aa).

K19, F68, R96, T102, R116, and N126 together coordinate ATP. Residue H129 is the Pros-phosphohistidine intermediate of the active site.

This sequence belongs to the NDK family. Requires Mg(2+) as cofactor. As to expression, expressed at a moderately low level in many tissues. Most abundant in kidney, prostate, ovary, intestine, and spleen.

It catalyses the reaction a 2'-deoxyribonucleoside 5'-diphosphate + ATP = a 2'-deoxyribonucleoside 5'-triphosphate + ADP. It carries out the reaction a ribonucleoside 5'-diphosphate + ATP = a ribonucleoside 5'-triphosphate + ADP. Major role in the synthesis of nucleoside triphosphates other than ATP. The ATP gamma phosphate is transferred to the NDP beta phosphate via a ping-pong mechanism, using a phosphorylated active-site intermediate. Inhibitor of p53-induced apoptosis. The protein is Nucleoside diphosphate kinase 6 (NME6) of Homo sapiens (Human).